The following is a 476-amino-acid chain: Adenosylhomocysteinase (476 aa).

Thr-67, Asp-142, and Glu-202 together coordinate substrate. 203–205 (TTT) contacts NAD(+). Substrate-binding residues include Lys-232 and Asp-236. NAD(+)-binding positions include Asn-237, 266–271 (GYGDVG), Glu-289, Asn-324, 345–347 (IGH), and Asn-390.

It belongs to the adenosylhomocysteinase family. NAD(+) is required as a cofactor.

It is found in the cytoplasm. The catalysed reaction is S-adenosyl-L-homocysteine + H2O = L-homocysteine + adenosine. Its pathway is amino-acid biosynthesis; L-homocysteine biosynthesis; L-homocysteine from S-adenosyl-L-homocysteine: step 1/1. Its function is as follows. May play a key role in the regulation of the intracellular concentration of adenosylhomocysteine. This Prochlorococcus marinus (strain MIT 9211) protein is Adenosylhomocysteinase.